A 255-amino-acid chain; its full sequence is Phosphate import ATP-binding protein PstB (255 aa).

One can recognise an ABC transporter domain in the interval 10–250 (INIKDLNLWY…PQMKSTEDYI (241 aa)). Position 42 to 49 (42 to 49 (GPSGCGKS)) interacts with ATP.

It belongs to the ABC transporter superfamily. Phosphate importer (TC 3.A.1.7) family. The complex is composed of two ATP-binding proteins (PstB), two transmembrane proteins (PstC and PstA) and a solute-binding protein (PstS).

It localises to the cell membrane. It carries out the reaction phosphate(out) + ATP + H2O = ADP + 2 phosphate(in) + H(+). Part of the ABC transporter complex PstSACB involved in phosphate import. Responsible for energy coupling to the transport system. This Methanococcoides burtonii (strain DSM 6242 / NBRC 107633 / OCM 468 / ACE-M) protein is Phosphate import ATP-binding protein PstB.